Reading from the N-terminus, the 851-residue chain is Putative cell signaling protein (851 aa).

3 stretches are compositionally biased toward basic and acidic residues: residues 165–176, 196–223, and 767–781; these read KLNEQDGKKSDN, DQAR…EETK, and SEER…LSHD. Disordered stretches follow at residues 165 to 223 and 714 to 781; these read KLNE…EETK and DDSE…LSHD.

Palmitoylated.

In Schizosaccharomyces pombe (strain 972 / ATCC 24843) (Fission yeast), this protein is Putative cell signaling protein.